Consider the following 123-residue polypeptide: Cytochrome c-555 (123 aa).

Residues 1 to 27 form the signal peptide; it reads MDHKKTSIRTTALAALVLGAVAAPAFS. Heme c contacts are provided by Cys46, Cys49, His50, and Met86.

Binds 1 heme c group covalently per subunit.

The protein is Cytochrome c-555 of Methylococcus capsulatus (strain ATCC 33009 / NCIMB 11132 / Bath).